The sequence spans 616 residues: Dihydroxy-acid dehydratase (616 aa).

Mg(2+) is bound at residue Asp-81. Residue Cys-122 coordinates [2Fe-2S] cluster. The Mg(2+) site is built by Asp-123 and Lys-124. Residue Lys-124 is modified to N6-carboxylysine. Residue Cys-195 participates in [2Fe-2S] cluster binding. Glu-491 contributes to the Mg(2+) binding site. Ser-517 functions as the Proton acceptor in the catalytic mechanism.

Belongs to the IlvD/Edd family. Homodimer. The cofactor is [2Fe-2S] cluster. Mg(2+) is required as a cofactor.

The catalysed reaction is (2R)-2,3-dihydroxy-3-methylbutanoate = 3-methyl-2-oxobutanoate + H2O. It catalyses the reaction (2R,3R)-2,3-dihydroxy-3-methylpentanoate = (S)-3-methyl-2-oxopentanoate + H2O. It functions in the pathway amino-acid biosynthesis; L-isoleucine biosynthesis; L-isoleucine from 2-oxobutanoate: step 3/4. The protein operates within amino-acid biosynthesis; L-valine biosynthesis; L-valine from pyruvate: step 3/4. Its function is as follows. Functions in the biosynthesis of branched-chain amino acids. Catalyzes the dehydration of (2R,3R)-2,3-dihydroxy-3-methylpentanoate (2,3-dihydroxy-3-methylvalerate) into 2-oxo-3-methylpentanoate (2-oxo-3-methylvalerate) and of (2R)-2,3-dihydroxy-3-methylbutanoate (2,3-dihydroxyisovalerate) into 2-oxo-3-methylbutanoate (2-oxoisovalerate), the penultimate precursor to L-isoleucine and L-valine, respectively. The polypeptide is Dihydroxy-acid dehydratase (Salmonella newport (strain SL254)).